A 594-amino-acid chain; its full sequence is Adenine deaminase 1 (594 aa).

The protein belongs to the metallo-dependent hydrolases superfamily. Adenine deaminase family. Requires Mn(2+) as cofactor.

It carries out the reaction adenine + H2O + H(+) = hypoxanthine + NH4(+). The sequence is that of Adenine deaminase 1 from Desulfotalea psychrophila (strain LSv54 / DSM 12343).